A 135-amino-acid chain; its full sequence is Transcriptional activator protein (135 aa).

The short motif at 17–32 (KIQHHIAKKRQVRRRR) is the Nuclear localization signal element. A zinc finger lies at 37 to 54 (CGCSYYIHLDCINHGFTH). The segment at 120–135 (HLDDLTVSDWSFFKSL) is transactivation.

Belongs to the geminiviridae transcriptional activator protein family. As to quaternary structure, monomer. Homodimer. Homooligomer. Self-interaction correlates with nuclear localization and efficient activation of transcription. Monomers suppress local silencing by interacting with and inactivating host adenosine kinase 2 (ADK2) in the cytoplasm. Interacts with and inhibits host SNF1 kinase. Binds to ssDNA. Phosphorylated.

The protein resides in the host nucleus. It is found in the host cytoplasm. In terms of biological role, strong activator of the late viral genes promoters. Acts as a suppressor of RNA-mediated gene silencing, also known as post-transcriptional gene silencing (PTGS), a mechanism of plant viral defense that limits the accumulation of viral RNAs. TrAP suppresses the host RNA silencing by inhibiting adenosine kinase 2 (ADK2), a kinase involved in a general methylation pathway. Also suppresses the host basal defense by interacting with and inhibiting SNF1 kinase, a key regulator of cell metabolism implicated in innate antiviral defense. Determines pathogenicity. This Tomato yellow leaf curl Sardinia virus (isolate Spain-2) (TYLCSV) protein is Transcriptional activator protein.